Consider the following 214-residue polypeptide: Probable GTP-binding protein EngB (214 aa).

The EngB-type G domain occupies G31–A214. Residues G39–S46, G66–E70, D93–G96, T160–D163, and T194–S196 contribute to the GTP site. S46 and T68 together coordinate Mg(2+).

It belongs to the TRAFAC class TrmE-Era-EngA-EngB-Septin-like GTPase superfamily. EngB GTPase family. Mg(2+) serves as cofactor.

In terms of biological role, necessary for normal cell division and for the maintenance of normal septation. The protein is Probable GTP-binding protein EngB of Bartonella tribocorum (strain CIP 105476 / IBS 506).